Consider the following 136-residue polypeptide: Large ribosomal subunit protein uL16c (136 aa).

A disordered region spans residues 1–20 (MLSPKRTRFRKQHRGRMKGK).

It belongs to the universal ribosomal protein uL16 family. In terms of assembly, part of the 50S ribosomal subunit.

Its subcellular location is the plastid. The protein localises to the chloroplast. The protein is Large ribosomal subunit protein uL16c of Agrostis stolonifera (Creeping bentgrass).